The sequence spans 325 residues: Geranylgeranyl transferase type-2 subunit beta (325 aa).

PFTB repeat units lie at residues 9–50 (KEKH…CVLD), 57–99 (KEEV…ATYD), 109–150 (KVRL…SILG), 157–198 (VDPA…AIAN), 208–249 (LEEI…AIIG), and 256–298 (YEKL…SLMG). Geranylgeranyl diphosphate-binding positions include 183-185 (HAA) and 228-240 (RPSKLPDVCYSWW). 3 residues coordinate Zn(2+): Asp-234, Cys-236, and His-286.

It belongs to the protein prenyltransferase subunit beta family. Heterodimer of an alpha and a beta subunit. It depends on Zn(2+) as a cofactor.

The enzyme catalyses geranylgeranyl diphosphate + L-cysteinyl-[protein] = S-geranylgeranyl-L-cysteinyl-[protein] + diphosphate. In terms of biological role, catalyzes the transfer of a geranyl-geranyl moiety from geranyl-geranyl pyrophosphate to proteins having the C-terminal -XCC or -XCXC, where both cysteines may become modified. Acts on YPT1 and SEC4. This is Geranylgeranyl transferase type-2 subunit beta (BET2) from Saccharomyces cerevisiae (strain ATCC 204508 / S288c) (Baker's yeast).